The sequence spans 407 residues: Aurora kinase A-A (407 aa).

Residues 1-10 (MERAVKENHK) show a composition bias toward basic and acidic residues. Residues 1-130 (MERAVKENHK…KTSAVPKEEG (130 aa)) form a disordered region. Polar residues-rich tracts occupy residues 67 to 77 (ILSSQKPTTQI) and 84 to 110 (QGHQ…STPN). In terms of domain architecture, Protein kinase spans 140-390 (FEIGRPLGKG…LKGVLEHPWI (251 aa)). ATP contacts are provided by residues Lys-150, Lys-169, and 217–220 (LDYA). Asp-263 serves as the catalytic Proton acceptor. Asp-281 is a binding site for ATP. An activation segment region spans residues 287–300 (HAPSSRRTTLCGTL).

This sequence belongs to the protein kinase superfamily. Ser/Thr protein kinase family. Aurora subfamily. Interacts with kif2c and kif11. Phosphorylated. Autophosphorylated on a serine residue. In terms of tissue distribution, highly expressed in ovary and testis.

It is found in the cytoplasm. The protein localises to the cytoskeleton. It localises to the spindle. The protein resides in the microtubule organizing center. Its subcellular location is the centrosome. The enzyme catalyses L-seryl-[protein] + ATP = O-phospho-L-seryl-[protein] + ADP + H(+). The catalysed reaction is L-threonyl-[protein] + ATP = O-phospho-L-threonyl-[protein] + ADP + H(+). Mitotic serine/threonine kinases that contributes to the regulation of cell cycle progression. Associates with the centrosome and the spindle microtubules during mitosis and plays a critical role in various mitotic events including the establishment of mitotic spindle, centrosome duplication, centrosome separation as well as maturation, chromosomal alignment, spindle assembly checkpoint, and cytokinesis. Phosphorylates numerous target proteins. Important for microtubule formation and/or stabilization. In Xenopus laevis (African clawed frog), this protein is Aurora kinase A-A (aurka-a).